Reading from the N-terminus, the 276-residue chain is Proteasome subunit beta type-8 (276 aa).

Positions 1-72 (MALLDLCGAP…RKVQIEMAHG (72 aa)) are cleaved as a propeptide — removed in mature form. T73 serves as the catalytic Nucleophile.

Belongs to the peptidase T1B family. The 26S proteasome consists of a 20S proteasome core and two 19S regulatory subunits. The 20S proteasome core is composed of 28 subunits that are arranged in four stacked rings, resulting in a barrel-shaped structure. The two end rings are each formed by seven alpha subunits, and the two central rings are each formed by seven beta subunits. The catalytic chamber with the active sites is on the inside of the barrel. Component of the immunoproteasome, where it displaces the equivalent housekeeping subunit PSMB5. Component of the spermatoproteasome, a form of the proteasome specifically found in testis. Directly interacts with POMP. Interacts with TAP1. Autocleaved. The resulting N-terminal Thr residue of the mature subunit is responsible for the nucleophile proteolytic activity.

The protein resides in the cytoplasm. The protein localises to the nucleus. It catalyses the reaction Cleavage of peptide bonds with very broad specificity.. The proteasome is a multicatalytic proteinase complex which is characterized by its ability to cleave peptides with Arg, Phe, Tyr, Leu, and Glu adjacent to the leaving group at neutral or slightly basic pH. The proteasome has an ATP-dependent proteolytic activity. This subunit is involved in antigen processing to generate class I binding peptides. May participate in the generation of spliced peptides resulting from the ligation of two separate proteasomal cleavage products that are not contiguous in the parental protein. Required for adipocyte differentiation. This chain is Proteasome subunit beta type-8 (Psmb8), found in Rattus norvegicus (Rat).